Reading from the N-terminus, the 376-residue chain is MGHFHLSNFIALIGILLVGPTATSGAAVSVVSQADSNDICSKYVVQAGETCSAIAQAHSITTADIETYNAQSWAWTGCGQISQGDFICLSSGESPMPVALPHAVCGPQVPGTARPNTWSKLGSLNPCPANQCCSSSGLCGTTPDFCTSAAHVPVALSMSTDTQPNQLTTTSQAITISTSPAIPLQKVVTSSETSSSMTTSTSATTSVPTTTSTTTTTKTTSTLKTTTTSTISSQTKTKTSTSTSTTKPKIVKPWSLTMYTKQDCKGDYYVLQGHNKGYSDTCLNLHGGLSSKDTDTGVSCKWFTNDGKSSTKCDSGALTRPQSWIVETGICTVFSVKDCKHDLHSNAYTPVPKHPCQNRGKFDTPYFVSMNCYTEG.

The signal sequence occupies residues 1 to 25 (MGHFHLSNFIALIGILLVGPTATSG). The region spanning 41–89 (SKYVVQAGETCSAIAQAHSITTADIETYNAQSWAWTGCGQISQGDFICL) is the LysM domain. Positions 190–219 (SSETSSSMTTSTSATTSVPTTTSTTTTTKT) are disordered.

This sequence belongs to the secreted LysM effector family.

It localises to the secreted. Functionally, secreted LysM effector that might have a role in sequestration of chitin oligosaccharides (breakdown products of fungal cell walls that are released during invasion and act as triggers of host immunity) to dampen host defense. The chain is Secreted LysM effector LysM9 from Penicillium expansum (Blue mold rot fungus).